The primary structure comprises 382 residues: MAFGSLLAFVALAAITRAAPTAESAVCPDGTRVTNAACCAFIPLAQDLQETLFQGDCGEDAHEVIRLTFHDAIAISQSLGPQAGGGADGSMLHFPTIEPNFSANSGIDDSVNNLLPFMQKHDTISAADLVQFAGAVALSNCPGAPRLEFMAGRPNTTIPAVEGLIPEPQDSVTKILQRFEDAGNFSPFEVVSLLASHTVARADKVDETIDAAPFDSTPFTFDTQVFLEVLLKGTGFPGSNNNTGEVMSPLPLGSGSDTGEMRLQSDFALARDERTACFWQSFVNEQEFMAASFKAAMAKLAILGHSRSSLIDCSDVVPVPKPAVNKPATFPATKGPKDLDTLTCKALKFPTLTSDPGATETLIPHCSNGGMSCPGVQFDGPA.

An N-terminal signal peptide occupies residues Met1–Ser24. Cystine bridges form between Cys27-Cys39, Cys38-Cys313, Cys57-Cys141, Cys277-Cys344, and Cys366-Cys373. Residues Glu59 and Glu63 each coordinate Mn(2+). The Proton acceptor role is filled by His70. Asp71, Gly86, Asp88, and Ser90 together coordinate Ca(2+). N-linked (GlcNAc...) asparagine glycans are attached at residues Asn100 and Asn155. A heme b-binding site is contributed by His197. Thr198 provides a ligand contact to Ca(2+). Position 203 (Asp203) interacts with Mn(2+). Residues Asp215, Thr217, Thr220, and Asp222 each coordinate Ca(2+). Asn241 carries N-linked (GlcNAc...) asparagine glycosylation.

It belongs to the peroxidase family. Ligninase subfamily. Requires heme b as cofactor. It depends on Ca(2+) as a cofactor.

The protein resides in the secreted. The enzyme catalyses 2 Mn(2+) + H2O2 + 2 H(+) = 2 Mn(3+) + 2 H2O. Its function is as follows. Catalyzes the oxidation of Mn(2+) to Mn(3+). The latter, acting as a diffusible redox mediator, is capable of oxidizing a variety of lignin compounds. The polypeptide is Manganese peroxidase H4 (Phanerodontia chrysosporium (White-rot fungus)).